The chain runs to 339 residues: D-erythrose-4-phosphate dehydrogenase (339 aa).

Position 12–13 (R12–I13) interacts with NAD(+). Residues S154–T156, R200, T213–K214, and R236 contribute to the substrate site. C155 serves as the catalytic Nucleophile. An NAD(+)-binding site is contributed by N318.

It belongs to the glyceraldehyde-3-phosphate dehydrogenase family. Epd subfamily. As to quaternary structure, homotetramer.

The protein resides in the cytoplasm. The catalysed reaction is D-erythrose 4-phosphate + NAD(+) + H2O = 4-phospho-D-erythronate + NADH + 2 H(+). The protein operates within cofactor biosynthesis; pyridoxine 5'-phosphate biosynthesis; pyridoxine 5'-phosphate from D-erythrose 4-phosphate: step 1/5. Catalyzes the NAD-dependent conversion of D-erythrose 4-phosphate to 4-phosphoerythronate. In Enterobacter sp. (strain 638), this protein is D-erythrose-4-phosphate dehydrogenase.